The sequence spans 371 residues: Aminomethyltransferase (371 aa).

The protein belongs to the GcvT family. The glycine cleavage system is composed of four proteins: P, T, L and H.

It carries out the reaction N(6)-[(R)-S(8)-aminomethyldihydrolipoyl]-L-lysyl-[protein] + (6S)-5,6,7,8-tetrahydrofolate = N(6)-[(R)-dihydrolipoyl]-L-lysyl-[protein] + (6R)-5,10-methylene-5,6,7,8-tetrahydrofolate + NH4(+). The glycine cleavage system catalyzes the degradation of glycine. In Cutibacterium acnes (strain DSM 16379 / KPA171202) (Propionibacterium acnes), this protein is Aminomethyltransferase.